We begin with the raw amino-acid sequence, 396 residues long: NADH-quinone oxidoreductase subunit D (396 aa).

It belongs to the complex I 49 kDa subunit family. In terms of assembly, NDH-1 is composed of 14 different subunits. Subunits NuoB, C, D, E, F, and G constitute the peripheral sector of the complex.

It is found in the cell inner membrane. The enzyme catalyses a quinone + NADH + 5 H(+)(in) = a quinol + NAD(+) + 4 H(+)(out). In terms of biological role, NDH-1 shuttles electrons from NADH, via FMN and iron-sulfur (Fe-S) centers, to quinones in the respiratory chain. The immediate electron acceptor for the enzyme in this species is believed to be ubiquinone. Couples the redox reaction to proton translocation (for every two electrons transferred, four hydrogen ions are translocated across the cytoplasmic membrane), and thus conserves the redox energy in a proton gradient. The protein is NADH-quinone oxidoreductase subunit D of Methylorubrum populi (strain ATCC BAA-705 / NCIMB 13946 / BJ001) (Methylobacterium populi).